Reading from the N-terminus, the 415-residue chain is Zona pellucida-like domain-containing protein 1 (415 aa).

A signal peptide spans 1–19 (MEQIWLLLLLTIRVLPGSA). Residues 20–372 (QFNGYNCDAN…PPFQLNAITS (353 aa)) are Extracellular-facing. In terms of domain architecture, ZP spans 43–320 (YCGVQAITMK…PICSHRERRD (278 aa)). Cystine bridges form between Cys44-Cys155 and Cys79-Cys104. 2 N-linked (GlcNAc...) asparagine glycosylation sites follow: Asn121 and Asn164. Intrachain disulfides connect Cys235/Cys296 and Cys255/Cys313. The tract at residues 323-360 (RRTTWSPQSSSGSAVLSAGPIITRSDETPTNNSQLGSP) is disordered. Composition is skewed to polar residues over residues 325–336 (TTWSPQSSSGSA) and 350–359 (TPTNNSQLGS). The chain crosses the membrane as a helical span at residues 373–393 (ALISGMVILGVTSFSLLLCSL). The Cytoplasmic portion of the chain corresponds to 394 to 415 (ALLHRKGPTSLVLNGIRNPVFD).

Post-translationally, proteolytically cleaved before the transmembrane segment to yield the secreted form found in the extracellular matrix of the cupula. As to expression, detected in placenta, kidney, lung, pancreas and at very low level in other tissues.

It localises to the cytoplasmic vesicle membrane. The protein localises to the secreted. It is found in the extracellular space. The protein resides in the extracellular matrix. Its function is as follows. Glycoprotein which is a component of the gelatinous extracellular matrix in the cupulae of the vestibular organ. The protein is Zona pellucida-like domain-containing protein 1 (ZPLD1) of Homo sapiens (Human).